A 1403-amino-acid polypeptide reads, in one-letter code: DNA-directed RNA polymerase subunit beta' (1403 aa).

Residues C70, C72, C85, and C88 each contribute to the Zn(2+) site. Mg(2+) is bound by residues D461, D463, and D465. Residues 687–708 (QQISQEETTGDRDGKRETRKQP) form a disordered region. Residues 695-706 (TGDRDGKRETRK) are compositionally biased toward basic and acidic residues. The Zn(2+) site is built by C805, C879, C886, and C889. A disordered region spans residues 1381-1403 (THGDTGPLGEPSRPVGTQTTGAA).

The protein belongs to the RNA polymerase beta' chain family. As to quaternary structure, the RNAP catalytic core consists of 2 alpha, 1 beta, 1 beta' and 1 omega subunit. When a sigma factor is associated with the core the holoenzyme is formed, which can initiate transcription. It depends on Mg(2+) as a cofactor. Requires Zn(2+) as cofactor.

The enzyme catalyses RNA(n) + a ribonucleoside 5'-triphosphate = RNA(n+1) + diphosphate. Functionally, DNA-dependent RNA polymerase catalyzes the transcription of DNA into RNA using the four ribonucleoside triphosphates as substrates. In Myxococcus xanthus (strain DK1622), this protein is DNA-directed RNA polymerase subunit beta'.